Here is a 151-residue protein sequence, read N- to C-terminus: MKVILKENIDTLGHIGDIVKVAPGYARNYLLPKGLAVEATEKNAKALEHVKRQMAYRKDKVTQAAKLLLAKLEGITVELVHQAGVEGKLFGSVTNMEIAAFLKEKGVDIDRKKIALAEPIKQVGEYSVPVKLHPEVTASLKVNVSAPAAAE.

This sequence belongs to the bacterial ribosomal protein bL9 family.

Binds to the 23S rRNA. The chain is Large ribosomal subunit protein bL9 from Pelobacter propionicus (strain DSM 2379 / NBRC 103807 / OttBd1).